The following is a 387-amino-acid chain: MRAPEGFLLGGIKREGIGVGLIFSERRCAVAGTFTENTLRAAPVEHSEEVCDRGVARGVIVNSGHANAMTGEEGYQDVLRTAEAIAELMGAPEDEIVVCSTGVIGERPPVDKIVRYAREVWEDIGPTERHVREFSRAIMTTDTEEKIALYEGDGWSLLGIAKGAGMIHPNMSTMLAFLLTDVGAKPKELQMWLRDVVNDTFNMITVDGDESTNDSVVLLANGSSNLKVGSDVTITEFQRALEEVCTELAEKIVRDGEGATKLMIVCVHGASNEVEARRAARAIASSNLVKAALFGENPNWGRIGAAVGAARVDVDPDELRIAFRSSEGEIVTYEGGPVDFDEEKAKRVLSASEVEIVVDLGVGDASARAWGCDLTYEYVRINAEYRT.

Residues threonine 140, lysine 162, threonine 173, glutamate 257, asparagine 382, and threonine 387 each coordinate substrate. The active-site Nucleophile is the threonine 173.

Belongs to the ArgJ family. Heterotetramer of two alpha and two beta chains.

It localises to the cytoplasm. The catalysed reaction is N(2)-acetyl-L-ornithine + L-glutamate = N-acetyl-L-glutamate + L-ornithine. It participates in amino-acid biosynthesis; L-arginine biosynthesis; L-ornithine and N-acetyl-L-glutamate from L-glutamate and N(2)-acetyl-L-ornithine (cyclic): step 1/1. Functionally, catalyzes the transfer of the acetyl group from N(2)-acetylornithine to glutamate, forming N-acetylglutamate and L-ornithine. The sequence is that of Glutamate N-acetyltransferase from Methanopyrus kandleri (strain AV19 / DSM 6324 / JCM 9639 / NBRC 100938).